Reading from the N-terminus, the 302-residue chain is N-acetylmuramic acid 6-phosphate etherase (302 aa).

In terms of domain architecture, SIS spans 58–221 (IGESFLNGGR…STGAMVKTGK (164 aa)). Glutamate 86 acts as the Proton donor in catalysis. The active site involves glutamate 117.

It belongs to the GCKR-like family. MurNAc-6-P etherase subfamily. In terms of assembly, homodimer.

The catalysed reaction is N-acetyl-D-muramate 6-phosphate + H2O = N-acetyl-D-glucosamine 6-phosphate + (R)-lactate. It functions in the pathway amino-sugar metabolism; N-acetylmuramate degradation. Specifically catalyzes the cleavage of the D-lactyl ether substituent of MurNAc 6-phosphate, producing GlcNAc 6-phosphate and D-lactate. The chain is N-acetylmuramic acid 6-phosphate etherase from Clostridium botulinum (strain Okra / Type B1).